Here is a 306-residue protein sequence, read N- to C-terminus: Probable pinoresinol-lariciresinol reductase 3 (306 aa).

Residues 14 to 20, arginine 39, and lysine 46 each bind NADP(+); that span reads GATGRLG. Lysine 131 serves as the catalytic Proton acceptor. Arginine 135 serves as a coordination point for NADP(+).

Belongs to the NmrA-type oxidoreductase family. Isoflavone reductase subfamily. Dimer.

Functionally, probable reductase that might be involved in the reduction of lariciresinol into secoisolariciresinol. In most plant species, a single enzyme is able to reduce both pinoresinol and lariciresinol efficiently while in Arabidopsis, PRR1 and PRR2 show a strict substrate selectivity for pinoresinol. This Arabidopsis thaliana (Mouse-ear cress) protein is Probable pinoresinol-lariciresinol reductase 3 (PLR3).